We begin with the raw amino-acid sequence, 228 residues long: Sec-independent protein translocase protein TatB (228 aa).

A helical membrane pass occupies residues M1 to G21. 2 disordered regions span residues D109 to D162 and P197 to S228. Basic residues predominate over residues A206–S228.

This sequence belongs to the TatB family. The Tat system comprises two distinct complexes: a TatABC complex, containing multiple copies of TatA, TatB and TatC subunits, and a separate TatA complex, containing only TatA subunits. Substrates initially bind to the TatABC complex, which probably triggers association of the separate TatA complex to form the active translocon.

It localises to the cell inner membrane. In terms of biological role, part of the twin-arginine translocation (Tat) system that transports large folded proteins containing a characteristic twin-arginine motif in their signal peptide across membranes. Together with TatC, TatB is part of a receptor directly interacting with Tat signal peptides. TatB may form an oligomeric binding site that transiently accommodates folded Tat precursor proteins before their translocation. This is Sec-independent protein translocase protein TatB from Neisseria meningitidis serogroup B (strain ATCC BAA-335 / MC58).